Consider the following 417-residue polypeptide: Gamma-glutamyl phosphate reductase (417 aa).

This sequence belongs to the gamma-glutamyl phosphate reductase family.

The protein resides in the cytoplasm. It carries out the reaction L-glutamate 5-semialdehyde + phosphate + NADP(+) = L-glutamyl 5-phosphate + NADPH + H(+). It participates in amino-acid biosynthesis; L-proline biosynthesis; L-glutamate 5-semialdehyde from L-glutamate: step 2/2. Functionally, catalyzes the NADPH-dependent reduction of L-glutamate 5-phosphate into L-glutamate 5-semialdehyde and phosphate. The product spontaneously undergoes cyclization to form 1-pyrroline-5-carboxylate. This is Gamma-glutamyl phosphate reductase from Hydrogenovibrio crunogenus (strain DSM 25203 / XCL-2) (Thiomicrospira crunogena).